The following is a 489-amino-acid chain: Phenylalanine--tRNA ligase alpha subunit (489 aa).

L-phenylalanine-binding positions include Thr-316, 355–357, Phe-395, and Phe-420; that span reads QLD.

This sequence belongs to the class-II aminoacyl-tRNA synthetase family. Phe-tRNA synthetase alpha subunit type 2 subfamily. Tetramer of two alpha and two beta subunits. Requires Mg(2+) as cofactor.

The protein localises to the cytoplasm. It carries out the reaction tRNA(Phe) + L-phenylalanine + ATP = L-phenylalanyl-tRNA(Phe) + AMP + diphosphate + H(+). This chain is Phenylalanine--tRNA ligase alpha subunit, found in Pyrobaculum aerophilum (strain ATCC 51768 / DSM 7523 / JCM 9630 / CIP 104966 / NBRC 100827 / IM2).